A 111-amino-acid polypeptide reads, in one-letter code: Rho GDP-dissociation inhibitor 1 (111 aa).

Residues lysine 57 and lysine 60 each participate in a glycyl lysine isopeptide (Lys-Gly) (interchain with G-Cter in SUMO1); alternate cross-link. Glycyl lysine isopeptide (Lys-Gly) (interchain with G-Cter in SUMO2); alternate cross-links involve residues lysine 57 and lysine 60. Lysine 60 carries the post-translational modification N6-acetyllysine; alternate. Position 60 is an N6-succinyllysine; alternate (lysine 60).

The protein belongs to the Rho GDI family. In terms of assembly, monomer. Interacts with FER. Interacts with PLXNB3. Forms a heterodimer with RAC1. Interacts with RHOA, the affinity is increased by three orders of magnitude when RHOA is prenylated. Interacts with PSMD10; the interaction increases ARHGDIA association with RHOA, leading to ARHGDIA-mediated inactivation of RHOA and ROCK and prolonged AKT activation. Interacts with KANK2; the interaction is direct and may regulate the interaction of ARHGDIA with RHOA, RAC1 and CDC42. Interacts with RHOC. Interacts with CDC42. Interacts with NGFR (via death domain); NGFR binding decreases the affinity for RHOA. In terms of processing, the N-terminus is blocked.

It is found in the cytoplasm. Its function is as follows. Controls Rho proteins homeostasis. Regulates the GDP/GTP exchange reaction of the Rho proteins by inhibiting the dissociation of GDP from them, and the subsequent binding of GTP to them. Retains Rho proteins such as CDC42, RAC1 and RHOA in an inactive cytosolic pool, regulating their stability and protecting them from degradation. Actively involved in the recycling and distribution of activated Rho GTPases in the cell, mediates extraction from membranes of both inactive and activated molecules due its exceptionally high affinity for prenylated forms. Through the modulation of Rho proteins, may play a role in cell motility regulation. In glioma cells, inhibits cell migration and invasion by mediating the signals of SEMA5A and PLXNB3 that lead to inactivation of RAC1. This is Rho GDP-dissociation inhibitor 1 (ARHGDIA) from Cavia porcellus (Guinea pig).